The sequence spans 648 residues: MWMGVGDSSGSPKPIRIVVVGEKGSGKSSLIMAAARNTFHPNIPSLLPYTNLPSEFFPDRIPATVIDTSSRPEDKGKVVKEVRQADAIVLTFAFDRPETLDRLSKYWLPLFRQLEVRVPIIVAGYEVDNKEAYNHFSIEQITSALMKQYREVETSIQWSAQRLDQAKDVLYYAQKAVIDPVGPVFDQENNVLKPRCIAALKRIFLLSDHNMDGILSDEELNELQKKCFDTPLVPCEIKQMKNVMQVTFPQGVNERGLTLDGFLFLNTRLIEEARIQTLWTMLRKFGYSNDLRLGDDLVPYSSFKRQADQSVELTNVAIEFLREVYEFFDSNGDNNLEPHEMGYLFETAPESPWTKPLYKDVTEENMDGGLSLEAFLSLWSLMTLIDPPRSLEYLMYIRFPSDDPSSAVRVTRKRVLDRKEKKSERKVVQCFVFGPKNAGKSALLNQFIGRSYDDDSNNNNGSTDEHYAVNMVKEPGVISDTDKTLVLKEVRIKDDGFMLSKEALAACDVAIFIYDSSDEYSWNRAVDMLAEVATIAKDSGYVFPCLMVAAKTDLDPFPVAIQESTRVTQDIGIDAPIPISSKLGDVSNLFRKILTAAENPHLNIPEIESKKKRSCKLNNRSLMAVSIGTAVLIAGLASFRLYTARKQS.

Topologically, residues Met-1–Ser-621 are cytoplasmic. Ser-11 is modified (phosphoserine). The region spanning Pro-12–Asp-179 is the Miro 1 domain. EF-hand domains are found at residues Arg-195–Thr-230 and Val-316–Ser-351. Ca(2+)-binding residues include Asp-208, Asn-210, Asp-212, Glu-219, Asp-329, Asn-331, Asp-333, Asn-335, and Glu-340. Positions Arg-425–Asn-599 constitute a Miro 2 domain. Residues Leu-622–Ala-644 traverse the membrane as a helical segment. The Mitochondrial intermembrane segment spans residues Arg-645 to Ser-648.

It belongs to the mitochondrial Rho GTPase family. Expressed at very low levels in roots, leaves, stems, flowers and siliques.

Its subcellular location is the mitochondrion outer membrane. In terms of biological role, mitochondrial GTPase that may be involved in mitochondrion development. This Arabidopsis thaliana (Mouse-ear cress) protein is Mitochondrial Rho GTPase 3.